The primary structure comprises 159 residues: MSTYPPPTGEWTTGLCGCFSDCKSCCLSFLCPCIPFGQVAEVLDKGMTSCGLAGLLYCLLLHAGVAVVPCHCIYTCTYRRKLRAAYDLPPEPCADCCVHMWCGPCAISQMYRELKNRGADPAMGRQPAFSLSLTSHCRFFLKSKYYHIIKKNWRTVKYG.

The chain crosses the membrane as a helical span at residues 52-74 (LAGLLYCLLLHAGVAVVPCHCIY).

This sequence belongs to the cornifelin family. In terms of tissue distribution, expressed in roots, coleoptiles, leaves, stalks, apical meristems, immature ears, endosperm, pericarp and tassel spikelets.

The protein resides in the membrane. This is Cell number regulator 4 (CNR4) from Zea mays (Maize).